The following is a 378-amino-acid chain: uncharacterized protein (378 aa).

Transmembrane regions (helical) follow at residues 7–29 (VTPFFFALALLNLLISLFIRLSQ), 33–55 (LFFVSLVFGFVGLTLMGAMYQII), 68–85 (VSYLVFFLILVSFYEFYT), 90–108 (SGSLFLFLGSLIFFFHLLL), 115–137 (PLTVRFLLASMIYLVLSALFLYL), 152–174 (LTVGSMLNAIYGVELAWIPMLIM), 204–225 (NYKLIALAGLLEFGVALYFLYL), 245–267 (IFLFALLFLPLGMLLGIFSASHA), 280–302 (LILYGFGAFTIFGGMLHLLPRIV), and 347–366 (FSPLHVISTVVYLVIMALFL).

The protein localises to the cell membrane. This is an uncharacterized protein from Aquifex aeolicus (strain VF5).